Consider the following 618-residue polypeptide: 1-deoxy-D-xylulose-5-phosphate synthase (618 aa).

Thiamine diphosphate contacts are provided by residues His-76 and 117–119 (GHS). Position 148 (Asp-148) interacts with Mg(2+). Thiamine diphosphate is bound by residues 149–150 (GA), Asn-177, Tyr-284, and Glu-364. Asn-177 is a binding site for Mg(2+).

It belongs to the transketolase family. DXPS subfamily. In terms of assembly, homodimer. Mg(2+) is required as a cofactor. Requires thiamine diphosphate as cofactor.

The enzyme catalyses D-glyceraldehyde 3-phosphate + pyruvate + H(+) = 1-deoxy-D-xylulose 5-phosphate + CO2. Its pathway is metabolic intermediate biosynthesis; 1-deoxy-D-xylulose 5-phosphate biosynthesis; 1-deoxy-D-xylulose 5-phosphate from D-glyceraldehyde 3-phosphate and pyruvate: step 1/1. Catalyzes the acyloin condensation reaction between C atoms 2 and 3 of pyruvate and glyceraldehyde 3-phosphate to yield 1-deoxy-D-xylulose-5-phosphate (DXP). This Francisella philomiragia subsp. philomiragia (strain ATCC 25017 / CCUG 19701 / FSC 153 / O#319-036) protein is 1-deoxy-D-xylulose-5-phosphate synthase.